Here is a 414-residue protein sequence, read N- to C-terminus: 2,3-bisphosphoglycerate-independent phosphoglycerate mutase (414 aa).

This sequence belongs to the BPG-independent phosphoglycerate mutase family. A-PGAM subfamily.

The enzyme catalyses (2R)-2-phosphoglycerate = (2R)-3-phosphoglycerate. It functions in the pathway carbohydrate degradation; glycolysis; pyruvate from D-glyceraldehyde 3-phosphate: step 3/5. Its function is as follows. Catalyzes the interconversion of 2-phosphoglycerate and 3-phosphoglycerate. The sequence is that of 2,3-bisphosphoglycerate-independent phosphoglycerate mutase from Saccharolobus islandicus (strain L.S.2.15 / Lassen #1) (Sulfolobus islandicus).